The sequence spans 219 residues: Translation initiation factor IF-3 (219 aa).

This sequence belongs to the IF-3 family. In terms of assembly, monomer.

It is found in the cytoplasm. Its function is as follows. IF-3 binds to the 30S ribosomal subunit and shifts the equilibrium between 70S ribosomes and their 50S and 30S subunits in favor of the free subunits, thus enhancing the availability of 30S subunits on which protein synthesis initiation begins. The protein is Translation initiation factor IF-3 of Prochlorococcus marinus (strain MIT 9303).